The sequence spans 430 residues: 26S protease regulatory subunit 6A (430 aa).

218–225 (GPPGTGKT) provides a ligand contact to ATP.

This sequence belongs to the AAA ATPase family. As to quaternary structure, component of the 19S proteasome regulatory particle complex. The 26S proteasome consists of a 20S core particle (CP) and two 19S regulatory subunits (RP). The regulatory particle is made of a lid composed of 9 subunits, a base containing 6 ATPases including the PSMC3 homolog rpt-5 and few additional components.

It is found in the cytoplasm. It localises to the nucleus. Functionally, component of the 26S proteasome, a multiprotein complex involved in the ATP-dependent degradation of ubiquitinated proteins. This complex plays a key role in the maintenance of protein homeostasis by removing misfolded or damaged proteins, which could impair cellular functions, and by removing proteins whose functions are no longer required. Therefore, the proteasome participates in numerous cellular processes, including cell cycle progression, apoptosis, or DNA damage repair. Belongs to the heterohexameric ring of AAA (ATPases associated with diverse cellular activities) proteins that unfolds ubiquitinated target proteins that are concurrently translocated into a proteolytic chamber and degraded into peptides. This Caenorhabditis elegans protein is 26S protease regulatory subunit 6A.